The following is a 488-amino-acid chain: Ribulose bisphosphate carboxylase large chain (488 aa).

Substrate is bound by residues Asn-127 and Thr-177. The active-site Proton acceptor is Lys-179. Lys-181 lines the substrate pocket. Mg(2+) is bound by residues Lys-205, Asp-207, and Glu-208. An N6-carboxylysine modification is found at Lys-205. Residue His-297 is the Proton acceptor of the active site. Substrate contacts are provided by Arg-298, His-330, and Ser-382.

The protein belongs to the RuBisCO large chain family. Type I subfamily. In terms of assembly, heterohexadecamer of 8 large chains and 8 small chains. The cofactor is Mg(2+).

Its subcellular location is the plastid. It is found in the chloroplast. The catalysed reaction is 2 (2R)-3-phosphoglycerate + 2 H(+) = D-ribulose 1,5-bisphosphate + CO2 + H2O. It carries out the reaction D-ribulose 1,5-bisphosphate + O2 = 2-phosphoglycolate + (2R)-3-phosphoglycerate + 2 H(+). In terms of biological role, ruBisCO catalyzes two reactions: the carboxylation of D-ribulose 1,5-bisphosphate, the primary event in carbon dioxide fixation, as well as the oxidative fragmentation of the pentose substrate in the photorespiration process. Both reactions occur simultaneously and in competition at the same active site. The polypeptide is Ribulose bisphosphate carboxylase large chain (rbcL) (Porphyra umbilicalis (Purple laver)).